We begin with the raw amino-acid sequence, 116 residues long: Small ribosomal subunit protein uS17 (116 aa).

This sequence belongs to the universal ribosomal protein uS17 family. As to quaternary structure, part of the 30S ribosomal subunit.

In terms of biological role, one of the primary rRNA binding proteins, it binds specifically to the 5'-end of 16S ribosomal RNA. The protein is Small ribosomal subunit protein uS17 of Pyrococcus horikoshii (strain ATCC 700860 / DSM 12428 / JCM 9974 / NBRC 100139 / OT-3).